Here is a 676-residue protein sequence, read N- to C-terminus: Envelope glycoprotein (676 aa).

The first 32 residues, methionine 1 to serine 32, serve as a signal peptide directing secretion. Topologically, residues isoleucine 33–glutamine 650 are extracellular. The N-linked (GlcNAc...) asparagine; by host glycan is linked to asparagine 40. 5 cysteine pairs are disulfide-bonded: cysteine 53/cysteine 609, cysteine 108/cysteine 135, cysteine 121/cysteine 147, cysteine 511/cysteine 556, and cysteine 601/cysteine 608. Positions arginine 54–glutamate 201 are receptor-binding. Residues asparagine 204, asparagine 228, asparagine 257, asparagine 268, and asparagine 296 are each glycosylated (N-linked (GlcNAc...) asparagine; by host). A mucin-like region region spans residues glutamate 305 to threonine 485. The segment at isoleucine 356–alanine 463 is disordered. Residues threonine 361 to proline 374 show a composition bias toward low complexity. A compositionally biased stretch (polar residues) spans threonine 402 to asparagine 422. The N-linked (GlcNAc...) asparagine; by host glycan is linked to asparagine 414. Low complexity predominate over residues proline 423 to proline 440. An N-linked (GlcNAc...) asparagine; by host glycan is attached at asparagine 441. Positions threonine 452–alanine 463 are enriched in polar residues. The fusion peptide stretch occupies residues glycine 524–alanine 539. A coiled-coil region spans residues leucine 554–glutamine 595. Asparagine 563 carries N-linked (GlcNAc...) asparagine; by host glycosylation. A coiled-coil region spans residues tryptophan 615–asparagine 634. N-linked (GlcNAc...) asparagine; by host glycosylation occurs at asparagine 618. Residues tryptophan 651 to isoleucine 671 form a helical membrane-spanning segment. 2 S-palmitoyl cysteine; by host lipidation sites follow: cysteine 670 and cysteine 672. At cysteine 672–leucine 676 the chain is on the cytoplasmic side.

It belongs to the filoviruses glycoprotein family. As to quaternary structure, homotrimer; each monomer consists of a GP1 and a GP2 subunit linked by disulfide bonds. The resulting peplomers (GP1,2) protrude from the virus surface as spikes. GP1 and GP2delta are part of GP1,2delta soluble complexes released by ectodomain shedding. GP1,2 interacts with host integrin ITGAV/alpha-V and CLEC10A. Also binds human CD209 and CLEC4M (collectively referred to as DC-SIGN(R)), as well as human FOLR1. Interacts with host entry receptor NPC1. The signal peptide region modulates GP's high mannose glycosylation, thereby determining the efficiency of the interactions with DC-SIGN(R). Post-translationally, N-glycosylated. In terms of processing, O-glycosylated in the mucin-like region. Palmitoylation of GP2 is not required for its function. Post-translationally, specific enzymatic cleavages in vivo yield mature proteins. The precursor is processed into GP1 and GP2 by host cell furin in the trans Golgi, and maybe by other host proteases, to yield the mature GP1 and GP2 proteins. The cleavage site corresponds to the furin optimal cleavage sequence [KR]-X-[KR]-R. This cleavage does not seem to be required for function. After the internalization of the virus into cell endosomes, GP1 C-terminus is removed by the endosomal proteases cathepsin B, cathepsin L, or both, leaving a 19-kDa N-terminal fragment which is further digested by cathepsin B. Proteolytic processing of GP1,2 by host ADAM17 can remove the transmembrane anchor of GP2 and leads to shedding of complexes consisting in GP1 and truncated GP2 (GP1,2delta).

The protein resides in the virion membrane. It localises to the host cell membrane. The protein localises to the secreted. Functionally, GP1 is responsible for binding to the receptor(s) on target cells. Interacts with CD209/DC-SIGN and CLEC4M/DC-SIGNR which act as cofactors for virus entry into the host cell. Binding to CD209 and CLEC4M, which are respectively found on dendritic cells (DCs), and on endothelial cells of liver sinusoids and lymph node sinuses, facilitate infection of macrophages and endothelial cells. These interactions not only facilitate virus cell entry, but also allow capture of viral particles by DCs and subsequent transmission to susceptible cells without DCs infection (trans infection). Binding to the macrophage specific lectin CLEC10A also seems to enhance virus infectivity. Interaction with FOLR1/folate receptor alpha may be a cofactor for virus entry in some cell types, although results are contradictory. Members of the Tyro3 receptor tyrosine kinase family also seem to be cell entry factors in filovirus infection. Once attached, the virions are internalized through clathrin-dependent endocytosis and/or macropinocytosis. After internalization of the virus into the endosomes of the host cell, proteolysis of GP1 by two cysteine proteases, CTSB/cathepsin B and CTSL/cathepsin L presumably induces a conformational change of GP2, unmasking its fusion peptide and initiating membranes fusion. GP2 acts as a class I viral fusion protein. Under the current model, the protein has at least 3 conformational states: pre-fusion native state, pre-hairpin intermediate state, and post-fusion hairpin state. During viral and target cell membrane fusion, the coiled coil regions (heptad repeats) assume a trimer-of-hairpins structure, positioning the fusion peptide in close proximity to the C-terminal region of the ectodomain. The formation of this structure appears to drive apposition and subsequent fusion of viral and target cell membranes. Responsible for penetration of the virus into the cell cytoplasm by mediating the fusion of the membrane of the endocytosed virus particle with the endosomal membrane. Low pH in endosomes induces an irreversible conformational change in GP2, releasing the fusion hydrophobic peptide. In terms of biological role, GP1,2 which is the disulfid-linked complex of GP1 and GP2, mediates endothelial cell activation and decreases endothelial barrier function. Mediates activation of primary macrophages. At terminal stages of the viral infection, when its expression is high, GP1,2 down-modulates the expression of various host cell surface molecules that are essential for immune surveillance and cell adhesion. Down-modulates integrins ITGA1, ITGA2, ITGA3, ITGA4, ITGA5, ITGA6, ITGAV and ITGB1. GP1,2 alters the cellular recycling of the dimer alpha-V/beta-3 via a dynamin-dependent pathway. Decrease in the host cell surface expression of various adhesion molecules may lead to cell detachment, contributing to the disruption of blood vessel integrity and hemorrhages developed during Ebola virus infection (cytotoxicity). This cytotoxicity appears late in the infection, only after the massive release of viral particles by infected cells. Down-modulation of host MHC-I, leading to altered recognition by immune cells, may explain the immune suppression and inflammatory dysfunction linked to Ebola infection. Also down-modulates EGFR surface expression. Counteracts the antiviral effect of host tetherin. Its function is as follows. GP2delta is part of the complex GP1,2delta released by host ADAM17 metalloprotease. This secreted complex may play a role in the pathogenesis of the virus by efficiently blocking the neutralizing antibodies that would otherwise neutralize the virus surface glycoproteins GP1,2. Might therefore contribute to the lack of inflammatory reaction seen during infection in spite the of extensive necrosis and massive virus production. GP1,2delta does not seem to be involved in activation of primary macrophages. This Tai Forest ebolavirus (strain Cote d'Ivoire-94) (TAFV) protein is Envelope glycoprotein (GP).